The primary structure comprises 174 residues: Pituitary tumor-transforming gene 1 protein-interacting protein (174 aa).

Positions 1 to 29 (MASAVLGLTLRWVMFLSAVLLLLLPGASA) are cleaved as a signal peptide. The Extracellular segment spans residues 30 to 93 (QEPPGVGCSE…RWGVCWVNFE (64 aa)). The 54-residue stretch at 36–89 (GCSEYTNRSCEECLRNVSCLWCNENKACLDYPVRKILPPASLCKLSSARWGVCW) folds into the PSI domain. 2 N-linked (GlcNAc...) asparagine glycosylation sites follow: Asn-42 and Asn-51. A helical transmembrane segment spans residues 94-114 (ALIITMSVLGGSVLLGITVCC). The Cytoplasmic segment spans residues 115–174 (CCCCRRKRSRKPDKSDERAMREQEERRVRQEERRAEMKSRHDEIRKKYGLFKEQNPYEKF). The disordered stretch occupies residues 126–155 (PDKSDERAMREQEERRVRQEERRAEMKSRH). Positions 127-163 (DKSDERAMREQEERRVRQEERRAEMKSRHDEIRKKYG) form a coiled coil. Tyr-171 carries the post-translational modification Phosphotyrosine.

In terms of assembly, interacts with PTTG1.

It localises to the cell membrane. It is found in the cytoplasm. The protein localises to the nucleus. May facilitate PTTG1 nuclear translocation. The chain is Pituitary tumor-transforming gene 1 protein-interacting protein (Pttg1ip) from Rattus norvegicus (Rat).